Reading from the N-terminus, the 142-residue chain is Spliceosomal protein DIB1 (142 aa).

Belongs to the DIM1 family. In terms of assembly, component of the 25S [U4/U6.U5] tri-snRNP.

It localises to the nucleus. Essential role in pre-mRNA splicing. Also essential for entry into mitosis (G2/M progression) as well as for chromosome segregation during mitosis. This Candida glabrata (strain ATCC 2001 / BCRC 20586 / JCM 3761 / NBRC 0622 / NRRL Y-65 / CBS 138) (Yeast) protein is Spliceosomal protein DIB1 (DIB1).